Here is a 100-residue protein sequence, read N- to C-terminus: Small ribosomal subunit protein uS14c (100 aa).

The protein belongs to the universal ribosomal protein uS14 family. Part of the 30S ribosomal subunit.

The protein localises to the plastid. The protein resides in the chloroplast. In terms of biological role, binds 16S rRNA, required for the assembly of 30S particles. This is Small ribosomal subunit protein uS14c from Crucihimalaya wallichii (Rock-cress).